The chain runs to 521 residues: Anaerobic nitric oxide reductase flavorubredoxin (521 aa).

Residues 30 to 210 (HKGTSYNSYL…PFSPLVTAKI (181 aa)) form a zinc metallo-hydrolase region. Fe cation is bound by residues H79, E81, D83, H147, D166, and H227. Residues 254-393 (ITLFYDSMSN…LCREHGRQLA (140 aa)) enclose the Flavodoxin-like domain. FMN is bound by residues 260–264 (SMSNN) and 342–369 (AFGS…DISI). The Rubredoxin-like domain maps to 464-515 (DQPMLCTVCQWIYDPALGEPDQLVAPGTPWARVPDSFLCPGCGIGKEVFEPC). Residues C469, C472, C502, and C505 each contribute to the Fe cation site.

In the N-terminal section; belongs to the zinc metallo-hydrolase group 3 family. In terms of assembly, homotetramer. It depends on Fe cation as a cofactor. Requires FMN as cofactor.

Its subcellular location is the cytoplasm. Its pathway is nitrogen metabolism; nitric oxide reduction. In terms of biological role, anaerobic nitric oxide reductase; uses NADH to detoxify nitric oxide (NO), protecting several 4Fe-4S NO-sensitive enzymes. Has at least 2 reductase partners, only one of which (NorW, flavorubredoxin reductase) has been identified. NO probably binds to the di-iron center; electrons enter from the NorW at rubredoxin and are transferred sequentially to the FMN center and the di-iron center. Also able to function as an aerobic oxygen reductase. The sequence is that of Anaerobic nitric oxide reductase flavorubredoxin from Aeromonas salmonicida (strain A449).